We begin with the raw amino-acid sequence, 381 residues long: Cytochrome b (381 aa).

The next 4 membrane-spanning stretches (helical) occupy residues 33 to 53, 77 to 98, 113 to 133, and 178 to 198; these read FGSL…FLAM, WLIR…FLHV, WNIG…GYVL, and FFAL…VHLT. Heme b-binding residues include histidine 83 and histidine 97. 2 residues coordinate heme b: histidine 182 and histidine 196. Histidine 201 is an a ubiquinone binding site. Transmembrane regions (helical) follow at residues 226–246, 288–308, 320–340, and 347–367; these read IKDI…ALFS, LGGV…PFLH, ISQT…WIGG, and FIII…HPMP.

The protein belongs to the cytochrome b family. In terms of assembly, the cytochrome bc1 complex contains 11 subunits: 3 respiratory subunits (MT-CYB, CYC1 and UQCRFS1), 2 core proteins (UQCRC1 and UQCRC2) and 6 low-molecular weight proteins (UQCRH/QCR6, UQCRB/QCR7, UQCRQ/QCR8, UQCR10/QCR9, UQCR11/QCR10 and a cleavage product of UQCRFS1). This cytochrome bc1 complex then forms a dimer. The cofactor is heme b.

It is found in the mitochondrion inner membrane. Functionally, component of the ubiquinol-cytochrome c reductase complex (complex III or cytochrome b-c1 complex) that is part of the mitochondrial respiratory chain. The b-c1 complex mediates electron transfer from ubiquinol to cytochrome c. Contributes to the generation of a proton gradient across the mitochondrial membrane that is then used for ATP synthesis. This is Cytochrome b (MT-CYB) from Sminthopsis youngsoni (Lesser hairy-footed dunnart).